Reading from the N-terminus, the 337-residue chain is Anthranilate phosphoribosyltransferase (337 aa).

Residues Gly82, Gly85–Asp86, Thr90, Asn92–Thr95, Lys110–Ser118, and Ser122 contribute to the 5-phospho-alpha-D-ribose 1-diphosphate site. Gly82 is an anthranilate binding site. Mg(2+) is bound at residue Ser94. Arg168 is an anthranilate binding site. Mg(2+) is bound by residues Asp226 and Glu227.

This sequence belongs to the anthranilate phosphoribosyltransferase family. Homodimer. The cofactor is Mg(2+).

It catalyses the reaction N-(5-phospho-beta-D-ribosyl)anthranilate + diphosphate = 5-phospho-alpha-D-ribose 1-diphosphate + anthranilate. It participates in amino-acid biosynthesis; L-tryptophan biosynthesis; L-tryptophan from chorismate: step 2/5. Its function is as follows. Catalyzes the transfer of the phosphoribosyl group of 5-phosphorylribose-1-pyrophosphate (PRPP) to anthranilate to yield N-(5'-phosphoribosyl)-anthranilate (PRA). The polypeptide is Anthranilate phosphoribosyltransferase (Francisella tularensis subsp. holarctica (strain OSU18)).